The sequence spans 212 residues: 2-phospho-L-lactate guanylyltransferase (212 aa).

The protein belongs to the CofC family. As to quaternary structure, homodimer.

The catalysed reaction is (2S)-2-phospholactate + GTP + H(+) = (2S)-lactyl-2-diphospho-5'-guanosine + diphosphate. It functions in the pathway cofactor biosynthesis; coenzyme F420 biosynthesis. Functionally, guanylyltransferase that catalyzes the activation of (2S)-2-phospholactate (2-PL) as (2S)-lactyl-2-diphospho-5'-guanosine, via the condensation of 2-PL with GTP. It is involved in the biosynthesis of coenzyme F420, a hydride carrier cofactor. The sequence is that of 2-phospho-L-lactate guanylyltransferase from Methanocorpusculum labreanum (strain ATCC 43576 / DSM 4855 / Z).